Reading from the N-terminus, the 1081-residue chain is DNA polymerase catalytic subunit (1081 aa).

The protein belongs to the DNA polymerase type-B family. In terms of assembly, forms a complex with the ssDNA-binding protein UL29, the DNA polymerase processivity factor, and the alkaline exonuclease. Interacts with the putative helicase-primase complex subunit UL8; this interaction may coordinate leading and lagging strand DNA synthesis at the replication fork.

It localises to the host nucleus. It catalyses the reaction DNA(n) + a 2'-deoxyribonucleoside 5'-triphosphate = DNA(n+1) + diphosphate. The enzyme catalyses Endonucleolytic cleavage to 5'-phosphomonoester.. Its function is as follows. Replicates viral genomic DNA. The replication complex is composed of six viral proteins: the DNA polymerase, processivity factor, primase, primase-associated factor, helicase, and ssDNA-binding protein. Additionally, the polymerase contains an intrinsic ribonuclease H (RNase H) activity that specifically degrades RNA/DNA heteroduplexes or duplex DNA substrates in the 5' to 3' direction. Therefore, it can catalyze the excision of the RNA primers that initiate the synthesis of Okazaki fragments at a replication fork during viral DNA replication. In Psittacid herpesvirus 1 (isolate Amazon parrot/-/97-0001/1997) (PsHV-1), this protein is DNA polymerase catalytic subunit (UL30).